The following is a 468-amino-acid chain: 6-phospho-beta-galactosidase (468 aa).

5 residues coordinate D-galactose 6-phosphate: Gln19, His116, Asn159, Glu160, and Asn297. Glu160 (proton donor) is an active-site residue. The active-site Nucleophile is Glu375. Residues Ser428, Trp429, Lys435, and Tyr437 each coordinate D-galactose 6-phosphate.

The protein belongs to the glycosyl hydrolase 1 family.

It catalyses the reaction a 6-phospho-beta-D-galactoside + H2O = D-galactose 6-phosphate + an alcohol. Its pathway is carbohydrate metabolism; lactose degradation; D-galactose 6-phosphate and beta-D-glucose from lactose 6-phosphate: step 1/1. This chain is 6-phospho-beta-galactosidase, found in Streptococcus pyogenes serotype M6 (strain ATCC BAA-946 / MGAS10394).